The sequence spans 371 residues: Aspartate-semialdehyde dehydrogenase (371 aa).

NADP(+) contacts are provided by residues 10–13 (RGMV), 37–38 (TS), and Gln74. Residue Arg103 coordinates phosphate. Cys136 serves as the catalytic Acyl-thioester intermediate. A substrate-binding site is contributed by Gln163. Ser166 contributes to the NADP(+) binding site. Glu243 serves as a coordination point for substrate. Phosphate is bound at residue Lys246. A substrate-binding site is contributed by Arg270. The Proton acceptor role is filled by His277. NADP(+) is bound at residue Gln353.

It belongs to the aspartate-semialdehyde dehydrogenase family. Homodimer.

It carries out the reaction L-aspartate 4-semialdehyde + phosphate + NADP(+) = 4-phospho-L-aspartate + NADPH + H(+). It functions in the pathway amino-acid biosynthesis; L-lysine biosynthesis via DAP pathway; (S)-tetrahydrodipicolinate from L-aspartate: step 2/4. The protein operates within amino-acid biosynthesis; L-methionine biosynthesis via de novo pathway; L-homoserine from L-aspartate: step 2/3. It participates in amino-acid biosynthesis; L-threonine biosynthesis; L-threonine from L-aspartate: step 2/5. Functionally, catalyzes the NADPH-dependent formation of L-aspartate-semialdehyde (L-ASA) by the reductive dephosphorylation of L-aspartyl-4-phosphate. This chain is Aspartate-semialdehyde dehydrogenase, found in Haemophilus influenzae (strain ATCC 51907 / DSM 11121 / KW20 / Rd).